The primary structure comprises 390 residues: Leu/Ile/Val-binding protein homolog 6 (390 aa).

An N-terminal signal peptide occupies residues 1–21 (MKKIALTALAVFSLAASAAYA).

Belongs to the leucine-binding protein family.

Its function is as follows. Component of an amino-acid transport system. The protein is Leu/Ile/Val-binding protein homolog 6 of Brucella abortus (strain 2308).